The primary structure comprises 612 residues: UvrABC system protein C (612 aa).

A GIY-YIG domain is found at 13-92; the sequence is AKPGVYIMHD…IKEHRPKYNT (80 aa). The UVR domain maps to 204–239; that stretch reads KKIMDRLTTQMQEASEKMEYEEAARYRDLLMSVKQV.

This sequence belongs to the UvrC family. As to quaternary structure, interacts with UvrB in an incision complex.

The protein resides in the cytoplasm. Its function is as follows. The UvrABC repair system catalyzes the recognition and processing of DNA lesions. UvrC both incises the 5' and 3' sides of the lesion. The N-terminal half is responsible for the 3' incision and the C-terminal half is responsible for the 5' incision. The polypeptide is UvrABC system protein C (Lachnospira eligens (strain ATCC 27750 / DSM 3376 / VPI C15-48 / C15-B4) (Eubacterium eligens)).